The primary structure comprises 166 residues: Chemoreceptor glutamine deamidase CheD (166 aa).

This sequence belongs to the CheD family. Forms a complex with CheC.

It carries out the reaction L-glutaminyl-[protein] + H2O = L-glutamyl-[protein] + NH4(+). Its function is as follows. Deamidates glutamine residues to glutamate on methyl-accepting chemotaxis receptors (MCPs). CheD-mediated MCP deamidation is required for productive communication of the conformational signals of the chemoreceptors to the CheA kinase. The protein is Chemoreceptor glutamine deamidase CheD of Bacillus velezensis (strain DSM 23117 / BGSC 10A6 / LMG 26770 / FZB42) (Bacillus amyloliquefaciens subsp. plantarum).